Consider the following 456-residue polypeptide: Esterase MT1326 (456 aa).

3 consecutive LysM domains span residues 3 to 50 (STHA…RLIM), 54 to 101 (TRYT…RLIM), and 105 to 152 (TRYT…VLVI). Residues Ser294, Asp391, and His425 contribute to the active site.

This sequence belongs to the AB hydrolase superfamily.

It is found in the secreted. It localises to the cell wall. It carries out the reaction a fatty acid ester + H2O = an aliphatic alcohol + a fatty acid + H(+). In terms of biological role, exhibits lipolytic activity with medium chain length esters as optimum substrates. In Mycobacterium tuberculosis (strain CDC 1551 / Oshkosh), this protein is Esterase MT1326.